We begin with the raw amino-acid sequence, 210 residues long: Outer-membrane lipoprotein LolB (210 aa).

A signal peptide spans 1-26 (MSKLKIDTKRRFSLLIALVLIISLSS). The N-palmitoyl cysteine moiety is linked to residue Cys27. Cys27 carries the S-diacylglycerol cysteine lipid modification.

It belongs to the LolB family. In terms of assembly, monomer.

It is found in the cell outer membrane. Functionally, plays a critical role in the incorporation of lipoproteins in the outer membrane after they are released by the LolA protein. This is Outer-membrane lipoprotein LolB from Francisella tularensis subsp. novicida (strain U112).